A 43-amino-acid polypeptide reads, in one-letter code: Photosystem I reaction center subunit IX (43 aa).

A helical transmembrane segment spans residues 7 to 27; sequence YLSTAPVLSTIWFGSLAGLLI.

The protein belongs to the PsaJ family.

The protein resides in the plastid. It is found in the chloroplast thylakoid membrane. Functionally, may help in the organization of the PsaE and PsaF subunits. This is Photosystem I reaction center subunit IX from Vitis vinifera (Grape).